We begin with the raw amino-acid sequence, 154 residues long: Protein MoxZ (154 aa).

The sequence is that of Protein MoxZ (moxZ) from Paracoccus denitrificans.